The sequence spans 425 residues: Glutamyl-tRNA reductase (425 aa).

Residues 49 to 52 (TCNR), serine 107, 112 to 114 (EPQ), and glutamine 118 each bind substrate. The Nucleophile role is filled by cysteine 50. 187–192 (GAGETI) is an NADP(+) binding site.

It belongs to the glutamyl-tRNA reductase family. As to quaternary structure, homodimer.

The enzyme catalyses (S)-4-amino-5-oxopentanoate + tRNA(Glu) + NADP(+) = L-glutamyl-tRNA(Glu) + NADPH + H(+). It functions in the pathway porphyrin-containing compound metabolism; protoporphyrin-IX biosynthesis; 5-aminolevulinate from L-glutamyl-tRNA(Glu): step 1/2. Functionally, catalyzes the NADPH-dependent reduction of glutamyl-tRNA(Glu) to glutamate 1-semialdehyde (GSA). This Pseudomonas savastanoi pv. phaseolicola (strain 1448A / Race 6) (Pseudomonas syringae pv. phaseolicola (strain 1448A / Race 6)) protein is Glutamyl-tRNA reductase.